A 171-amino-acid chain; its full sequence is Mitochondrial import inner membrane translocase subunit Tim17-A (171 aa).

Cysteines 9 and 78 form a disulfide. Helical transmembrane passes span 17 to 37, 63 to 77, and 113 to 133; these read CGGA…IKGF, GGSF…SMID, and VGSA…GILL. The segment at 144 to 171 is disordered; the sequence is GPQFAEDPSQLPSTQLPSSPFGDYRQYQ. Low complexity predominate over residues 151–163; the sequence is PSQLPSTQLPSSP.

Belongs to the Tim17/Tim22/Tim23 family. In terms of assembly, component of the TIM23 complex at least composed of TIMM23, TIMM17 (TIMM17A or TIMM17B) and TIMM50. The complex interacts with the TIMM44 component of the PAM complex and with DNAJC15. In terms of processing, degraded by YMEL1 downstream of the integrated stress response (ISR).

The protein localises to the mitochondrion inner membrane. Essential component of the TIM23 complex, a complex that mediates the translocation of transit peptide-containing proteins across the mitochondrial inner membrane. The protein is Mitochondrial import inner membrane translocase subunit Tim17-A (TIMM17A) of Homo sapiens (Human).